Consider the following 197-residue polypeptide: Allatostatins (197 aa).

A signal peptide spans 1–27 (MRSRTSVLTSSLAFLYFFGIVGRSALA). A propeptide spanning residues 28–56 (MEETPASSMNLQHYNNMLNPMVFDDTMPE) is cleaved from the precursor. Isoleucine 76 carries the isoleucine amide modification. The propeptide occupies 80-86 (WIDTNDN). Leucine 96, leucine 106, leucine 154, and leucine 184 each carry leucine amide. The tract at residues 161–197 (YSGGQPLGSKRPNDMLSQRYHFGLGKRMSEDEEESSQ) is disordered. A propeptide spanning residues 188 to 197 (MSEDEEESSQ) is cleaved from the precursor.

The protein belongs to the allatostatin family.

The protein localises to the secreted. In terms of biological role, neuropeptides. The sequence is that of Allatostatins from Apis mellifera (Honeybee).